The chain runs to 66 residues: Large ribosomal subunit protein bL31 (66 aa).

Residues Cys16, Cys18, Cys36, and Cys39 each contribute to the Zn(2+) site.

Belongs to the bacterial ribosomal protein bL31 family. Type A subfamily. In terms of assembly, part of the 50S ribosomal subunit. Zn(2+) serves as cofactor.

Functionally, binds the 23S rRNA. This chain is Large ribosomal subunit protein bL31, found in Priestia megaterium (Bacillus megaterium).